We begin with the raw amino-acid sequence, 486 residues long: Serine/threonine-protein kinase 4 (486 aa).

A Protein kinase domain is found at 29-280 (FDVLEKLGEG…AIQLLQHPFV (252 aa)). ATP is bound by residues 35–43 (LGEGSYGSV) and lysine 58. Catalysis depends on aspartate 148, which acts as the Proton acceptor. At threonine 182 the chain carries Phosphothreonine; by autocatalysis. The stretch at 288–324 (ILRDLINEAMDIKLKRQEAQQRELDQEDEENSEEDET) forms a coiled coil. The disordered stretch occupies residues 305-332 (EAQQRELDQEDEENSEEDETDSGTMVRA). Acidic residues predominate over residues 312–325 (DQEDEENSEEDETD). The SARAH domain maps to 432–479 (YEFLKTWSVDELQRRLSALDPMMEQEIEEIRQKYQSKRQPILDAIEAK).

Belongs to the protein kinase superfamily. STE Ser/Thr protein kinase family. STE20 subfamily. As to quaternary structure, homodimer; mediated via the coiled-coil region. It depends on Mg(2+) as a cofactor. In terms of processing, proteolytically cleaved by caspase-3 during apoptosis at Asp-325 resulting in a 37 kDa form. Proteolytic cleavage results in kinase activation and nuclear translocation of the truncated form (MST1/N).

The protein localises to the cytoplasm. It localises to the nucleus. It catalyses the reaction L-seryl-[protein] + ATP = O-phospho-L-seryl-[protein] + ADP + H(+). It carries out the reaction L-threonyl-[protein] + ATP = O-phospho-L-threonyl-[protein] + ADP + H(+). With respect to regulation, the C-terminal non-catalytic region inhibits the kinase activity, the enzyme is activated by caspase-cleavage. Homodimerization and autophosphorylation of Thr-182 is also required for full activation. In terms of biological role, stress-activated, pro-apoptotic kinase which, following caspase-cleavage, enters the nucleus and induces chromatin condensation followed by internucleosomal DNA fragmentation. Key component of the Hippo signaling pathway which plays a pivotal role in organ size control and tumor suppression by restricting proliferation and promoting apoptosis. The core of this pathway is composed of a kinase cascade wherein STK3/MST2 and STK4/MST1, in complex with its regulatory protein SAV1, phosphorylates and activates LATS1/2 in complex with its regulatory protein MOB1, which in turn phosphorylates and inactivates YAP1 oncoprotein and WWTR1/TAZ. Phosphorylation of YAP1 by LATS2 inhibits its translocation into the nucleus to regulate cellular genes important for cell proliferation, cell death, and cell migration. Phosphorylates 'Ser-14' of histone H2B (H2BS14ph) during apoptosis. Phosphorylates FOXO3 upon oxidative stress, which results in its nuclear translocation and cell death initiation. This is Serine/threonine-protein kinase 4 (STK4) from Gallus gallus (Chicken).